The primary structure comprises 542 residues: Chaperonin GroEL 3 (542 aa).

ATP is bound by residues 30 to 33, Lys-51, 87 to 91, Gly-415, and Asp-496; these read TLGP and DGTTT.

The protein belongs to the chaperonin (HSP60) family. Forms a cylinder of 14 subunits composed of two heptameric rings stacked back-to-back. Interacts with the co-chaperonin GroES.

Its subcellular location is the cytoplasm. It catalyses the reaction ATP + H2O + a folded polypeptide = ADP + phosphate + an unfolded polypeptide.. Functionally, together with its co-chaperonin GroES, plays an essential role in assisting protein folding. The GroEL-GroES system forms a nano-cage that allows encapsulation of the non-native substrate proteins and provides a physical environment optimized to promote and accelerate protein folding. This Sinorhizobium medicae (strain WSM419) (Ensifer medicae) protein is Chaperonin GroEL 3.